The following is a 419-amino-acid chain: Innexin-2 (419 aa).

4 helical membrane-spanning segments follow: residues 33-53 (AWFT…KQYF), 108-128 (PLVL…WNLF), 184-204 (INYF…MVLL), and 270-290 (LYIC…AGMI).

The protein belongs to the pannexin family.

The protein resides in the cell membrane. It localises to the cell junction. It is found in the gap junction. Structural component of the gap junctions. The chain is Innexin-2 (inx-2) from Caenorhabditis elegans.